Here is a 114-residue protein sequence, read N- to C-terminus: Beta-microseminoprotein (114 aa).

The first 20 residues, 1 to 20, serve as a signal peptide directing secretion; it reads MNVLLGSVVIFATFVTLCNA. Intrachain disulfides connect C22–C70, C38–C62, C57–C93, C60–C69, and C84–C107.

The protein belongs to the beta-microseminoprotein family. Homodimer; Interacts with PI16. Strongly expressed in prostate, liver, kidney, breast and penis. Also expressed in pancreas, esophagus, stomach, deodenum, colon, trachea, lung, salivary glands and fallopian tube. PSP94 is expressed in lung and breast, whereas PSP57 is found in kidney and bladder.

The protein localises to the secreted. The sequence is that of Beta-microseminoprotein (MSMB) from Homo sapiens (Human).